Reading from the N-terminus, the 345-residue chain is D-fructose 1,6-bisphosphatase class 2/sedoheptulose 1,7-bisphosphatase (345 aa).

Mn(2+) is bound by residues Asp33, Glu57, Asp97, and Glu100. Substrate contacts are provided by residues 100-102, Tyr131, 176-178, and 198-200; these read EGT, RDR, and DGD. Glu225 serves as a coordination point for Mn(2+).

It belongs to the FBPase class 2 family. As to quaternary structure, homotetramer. Mn(2+) serves as cofactor.

It catalyses the reaction beta-D-fructose 1,6-bisphosphate + H2O = beta-D-fructose 6-phosphate + phosphate. The enzyme catalyses D-sedoheptulose 1,7-bisphosphate + H2O = D-sedoheptulose 7-phosphate + phosphate. Its pathway is carbohydrate biosynthesis; Calvin cycle. Functionally, catalyzes the hydrolysis of fructose 1,6-bisphosphate (Fru 1,6-P2) and sedoheptulose 1,7-bisphosphate (Sed 1,7-P2) to fructose 6-phosphate and sedoheptulose 7-phosphate, respectively. The sequence is that of D-fructose 1,6-bisphosphatase class 2/sedoheptulose 1,7-bisphosphatase from Trichormus variabilis (strain ATCC 29413 / PCC 7937) (Anabaena variabilis).